The following is a 566-amino-acid chain: Proline--tRNA ligase (566 aa).

Belongs to the class-II aminoacyl-tRNA synthetase family. ProS type 1 subfamily. In terms of assembly, homodimer.

It is found in the cytoplasm. It carries out the reaction tRNA(Pro) + L-proline + ATP = L-prolyl-tRNA(Pro) + AMP + diphosphate. In terms of biological role, catalyzes the attachment of proline to tRNA(Pro) in a two-step reaction: proline is first activated by ATP to form Pro-AMP and then transferred to the acceptor end of tRNA(Pro). As ProRS can inadvertently accommodate and process non-cognate amino acids such as alanine and cysteine, to avoid such errors it has two additional distinct editing activities against alanine. One activity is designated as 'pretransfer' editing and involves the tRNA(Pro)-independent hydrolysis of activated Ala-AMP. The other activity is designated 'posttransfer' editing and involves deacylation of mischarged Ala-tRNA(Pro). The misacylated Cys-tRNA(Pro) is not edited by ProRS. The sequence is that of Proline--tRNA ligase from Bacillus cereus (strain B4264).